A 158-amino-acid chain; its full sequence is C-type lectin galactose-binding isoform (158 aa).

The signal sequence occupies residues 1–23; that stretch reads MGRFLLVTLSLLVMAFFLNGANS. Disulfide bonds link Cys26/Cys37, Cys54/Cys154, and Cys129/Cys146. Residues 33-155 enclose the C-type lectin domain; it reads RNGFCYKVFN…CTALRPFLCQ (123 aa). Residues Gln119, Asp121, and Glu127 each coordinate Ca(2+). Positions 119–121 match the Galactose-binding motif; it reads QPD. Residue Asn134 is glycosylated (N-linked (GlcNAc...) asparagine). Ca(2+) contacts are provided by Asn142 and Asp143.

Belongs to the true venom lectin family. Dimer. Probably disulfide-linked homodimer. Expressed by the venom gland.

It is found in the secreted. In terms of biological role, galactose-binding lectin that binds to and agglutinates erythrocytes in a calcium-dependent manner. The chain is C-type lectin galactose-binding isoform from Pseudechis australis (Mulga snake).